A 1400-amino-acid chain; its full sequence is DNA-directed RNA polymerase subunit beta' (1400 aa).

Zn(2+) is bound by residues Cys-71, Cys-73, Cys-86, and Cys-89. Residues Asp-462, Asp-464, and Asp-466 each contribute to the Mg(2+) site. Residues Cys-811, Cys-885, Cys-892, and Cys-895 each coordinate Zn(2+).

The protein belongs to the RNA polymerase beta' chain family. As to quaternary structure, the RNAP catalytic core consists of 2 alpha, 1 beta, 1 beta' and 1 omega subunit. When a sigma factor is associated with the core the holoenzyme is formed, which can initiate transcription. It depends on Mg(2+) as a cofactor. Requires Zn(2+) as cofactor.

The enzyme catalyses RNA(n) + a ribonucleoside 5'-triphosphate = RNA(n+1) + diphosphate. Its function is as follows. DNA-dependent RNA polymerase catalyzes the transcription of DNA into RNA using the four ribonucleoside triphosphates as substrates. This is DNA-directed RNA polymerase subunit beta' from Brucella anthropi (strain ATCC 49188 / DSM 6882 / CCUG 24695 / JCM 21032 / LMG 3331 / NBRC 15819 / NCTC 12168 / Alc 37) (Ochrobactrum anthropi).